We begin with the raw amino-acid sequence, 155 residues long: Urease accessory protein UreE (155 aa).

This sequence belongs to the UreE family.

It localises to the cytoplasm. In terms of biological role, involved in urease metallocenter assembly. Binds nickel. Probably functions as a nickel donor during metallocenter assembly. The sequence is that of Urease accessory protein UreE from Deinococcus radiodurans (strain ATCC 13939 / DSM 20539 / JCM 16871 / CCUG 27074 / LMG 4051 / NBRC 15346 / NCIMB 9279 / VKM B-1422 / R1).